The sequence spans 780 residues: Phosphoenolpyruvate synthase (780 aa).

Residue H409 is the Tele-phosphohistidine intermediate of the active site. R499, R566, E668, G689, S690, N691, and D692 together coordinate substrate. E668 is a binding site for Mg(2+). D692 lines the Mg(2+) pocket.

Belongs to the PEP-utilizing enzyme family. The cofactor is Mg(2+).

It catalyses the reaction pyruvate + ATP + H2O = phosphoenolpyruvate + AMP + phosphate + 2 H(+). It participates in carbohydrate biosynthesis; gluconeogenesis. Catalyzes the phosphorylation of pyruvate to phosphoenolpyruvate. The protein is Phosphoenolpyruvate synthase (ppsA) of Deinococcus radiodurans (strain ATCC 13939 / DSM 20539 / JCM 16871 / CCUG 27074 / LMG 4051 / NBRC 15346 / NCIMB 9279 / VKM B-1422 / R1).